A 364-amino-acid chain; its full sequence is Fructose-1,6-bisphosphatase class 1 3 (364 aa).

Mg(2+) contacts are provided by Glu101, Asp123, Leu125, and Asp126. Substrate-binding positions include 126–129 (DGSS) and Asn218. Glu290 lines the Mg(2+) pocket.

Belongs to the FBPase class 1 family. Homotetramer. Mg(2+) serves as cofactor.

Its subcellular location is the cytoplasm. The catalysed reaction is beta-D-fructose 1,6-bisphosphate + H2O = beta-D-fructose 6-phosphate + phosphate. It participates in carbohydrate biosynthesis; gluconeogenesis. This Cupriavidus necator (strain ATCC 17699 / DSM 428 / KCTC 22496 / NCIMB 10442 / H16 / Stanier 337) (Ralstonia eutropha) protein is Fructose-1,6-bisphosphatase class 1 3.